Consider the following 634-residue polypeptide: Protection of telomeres protein 1 (634 aa).

Belongs to the telombin family. Homodimer or homooligomer. Component of the shelterin complex (telosome) composed of TERF1, TERF2, TINF2, TERF2IP, ACD and POT1. Binds single-stranded telomeric DNA as a monomer. Associated component of the telomerase holoenzyme complex. Found in a complex with TERF1, TINF2 and TNKS1. Interacts with TNKS1. Forms heterodimers with ACD. Identified in a complex with ACD and single-stranded telomeric DNA.

It localises to the nucleus. The protein resides in the chromosome. The protein localises to the telomere. Component of the telomerase ribonucleoprotein (RNP) complex that is essential for the replication of chromosome termini. Is a component of the double-stranded telomeric DNA-binding TRF1 complex which is involved in the regulation of telomere length by cis-inhibition of telomerase. Also acts as a single-stranded telomeric DNA-binding protein and thus may act as a downstream effector of the TRF1 complex and may transduce information about telomere maintenance and/or length to the telomere terminus. Component of the shelterin complex (telosome) that is involved in the regulation of telomere length and protection. Shelterin associates with arrays of double-stranded TTAGGG repeats added by telomerase and protects chromosome ends; without its protective activity, telomeres are no longer hidden from the DNA damage surveillance and chromosome ends are inappropriately processed by DNA repair pathways. Binds to two or more telomeric single-stranded 5'-TTAGGG-3' repeats (G-strand) and with high specificity to a minimal telomeric single-stranded 5'-TAGGGTTAG-3' sequence. Binds telomeric single-stranded sequences internally or at proximity of a 3'-end. Its activity is TERT dependent but it does not increase TERT activity by itself. In contrast, the ACD-POT1 heterodimer enhances telomere elongation by increasing telomerase processivity. The sequence is that of Protection of telomeres protein 1 (POT1) from Macaca fascicularis (Crab-eating macaque).